The chain runs to 405 residues: MDIQKQIEIIRRGTVDLISEEELKSKLQKKKTLKIKAGFDPTAPDLHLGHFVQLKKLKHFQDLGHEVSFLLGDFTAMIGDPTGKSETRKRLSREEVLENSKTYQNQVFKVLDPVKTKIVYNSNWCSKMNFEDVLVLSSKYNVARMLERDDFSKRYKAGQPISMIEFLYPLVQGYDSVAMECDVELGGTDQKFNLLVGRDLQREYGKEAQCVLTLPLLVGLDGSKKMSKSLGNYVGITETPIDMFGKLMSISDDLMWNYFELLTDLPLPEIENRKNGMAKKELHPKEIKTELAKLIMDQFSSPSENEEAIQEWKKIHNPKSRAVPDDVKEIKLGEEFFAETPEPLLVWVLSKLSFIPSVSEGRRLIKAGGLYLSEDKITDEKFPIQKGKEYLVRQGKKGKFLKIIS.

The 'HIGH' region signature appears at 41 to 50; that stretch reads PTAPDLHLGH. The short motif at 225–229 is the 'KMSKS' region element; that stretch reads KMSKS. ATP is bound at residue lysine 228. The region spanning 342–404 is the S4 RNA-binding domain; sequence EPLLVWVLSK…GKKGKFLKII (63 aa).

The protein belongs to the class-I aminoacyl-tRNA synthetase family. TyrS type 2 subfamily. Homodimer.

The protein resides in the cytoplasm. It carries out the reaction tRNA(Tyr) + L-tyrosine + ATP = L-tyrosyl-tRNA(Tyr) + AMP + diphosphate + H(+). In terms of biological role, catalyzes the attachment of tyrosine to tRNA(Tyr) in a two-step reaction: tyrosine is first activated by ATP to form Tyr-AMP and then transferred to the acceptor end of tRNA(Tyr). In Leptospira interrogans serogroup Icterohaemorrhagiae serovar Lai (strain 56601), this protein is Tyrosine--tRNA ligase.